Reading from the N-terminus, the 349-residue chain is Lachesin (349 aa).

The N-terminal stretch at 1–18 (MDLRLYTIFVGFFSVVYA) is a signal peptide. The 106-residue stretch at 22 to 127 (PTISYISQEQ…NKITAEVDLQ (106 aa)) folds into the Ig-like V-type domain. A disulfide bond links Cys-43 and Cys-110. Ig-like C2-type domains follow at residues 132 to 218 (PVIS…IAVE) and 222 to 315 (PPVI…VELF). N-linked (GlcNAc...) asparagine glycosylation is present at Asn-137. 2 disulfide bridges follow: Cys-154/Cys-201 and Cys-244/Cys-299. The GPI-anchor amidated glycine moiety is linked to residue Gly-332. A propeptide spans 333–349 (DAAEISTSMALILISTI) (removed in mature form).

Post-translationally, the N-terminus is blocked. Expressed by all neurogenic cells early, but only those cells that become neuroblasts continue to express it. Expressed by neuroblasts, ganglion mother cells and neurons early in their lives, but expression becomes restricted to a subset of neurons as development progresses. Expressed by sensory neurons as they delaminate from the body wall ectoderm. It is also present on growing axons of the CNS and PNS and becomes restricted to a subset of axons later in development.

It localises to the cell membrane. In terms of biological role, may play a role in early neuronal differentiation and axon outgrowth. The chain is Lachesin (LAC) from Schistocerca americana (American grasshopper).